The sequence spans 254 residues: Ribonuclease HII (254 aa).

The 185-residue stretch at 70 to 254 (QAIAGIDEVG…TFEPIKSMYE (185 aa)) folds into the RNase H type-2 domain. 3 residues coordinate a divalent metal cation: Asp76, Glu77, and Asp168.

The protein belongs to the RNase HII family. Requires Mn(2+) as cofactor. The cofactor is Mg(2+).

The protein localises to the cytoplasm. The catalysed reaction is Endonucleolytic cleavage to 5'-phosphomonoester.. Endonuclease that specifically degrades the RNA of RNA-DNA hybrids. The polypeptide is Ribonuclease HII (Streptococcus sanguinis (strain SK36)).